Reading from the N-terminus, the 602-residue chain is Threonine--tRNA ligase (602 aa).

The tract at residues 208–499 is catalytic; sequence DHRKLGTELK…LTEHCAGEFP (292 aa). Residues Cys300, His351, and His476 each coordinate Zn(2+).

It belongs to the class-II aminoacyl-tRNA synthetase family. In terms of assembly, homodimer. Requires Zn(2+) as cofactor.

The protein resides in the cytoplasm. The enzyme catalyses tRNA(Thr) + L-threonine + ATP = L-threonyl-tRNA(Thr) + AMP + diphosphate + H(+). Its function is as follows. Catalyzes the attachment of threonine to tRNA(Thr) in a two-step reaction: L-threonine is first activated by ATP to form Thr-AMP and then transferred to the acceptor end of tRNA(Thr). Also edits incorrectly charged L-seryl-tRNA(Thr). This chain is Threonine--tRNA ligase, found in Campylobacter jejuni subsp. jejuni serotype O:6 (strain 81116 / NCTC 11828).